We begin with the raw amino-acid sequence, 193 residues long: Large ribosomal subunit protein bL25 (193 aa).

Belongs to the bacterial ribosomal protein bL25 family. CTC subfamily. As to quaternary structure, part of the 50S ribosomal subunit; part of the 5S rRNA/L5/L18/L25 subcomplex. Contacts the 5S rRNA. Binds to the 5S rRNA independently of L5 and L18.

In terms of biological role, this is one of the proteins that binds to the 5S RNA in the ribosome where it forms part of the central protuberance. In Hydrogenovibrio crunogenus (strain DSM 25203 / XCL-2) (Thiomicrospira crunogena), this protein is Large ribosomal subunit protein bL25.